The following is a 118-amino-acid chain: Putative pterin-4-alpha-carbinolamine dehydratase (118 aa).

The protein belongs to the pterin-4-alpha-carbinolamine dehydratase family.

The enzyme catalyses (4aS,6R)-4a-hydroxy-L-erythro-5,6,7,8-tetrahydrobiopterin = (6R)-L-erythro-6,7-dihydrobiopterin + H2O. This Pseudomonas fluorescens (strain ATCC BAA-477 / NRRL B-23932 / Pf-5) protein is Putative pterin-4-alpha-carbinolamine dehydratase.